A 329-amino-acid chain; its full sequence is DNA-directed RNA polymerase subunit alpha (329 aa).

An alpha N-terminal domain (alpha-NTD) region spans residues 1–234 (MQSAVNEFLT…QQLAVFVDLE (234 aa)). The interval 248–329 (IDPVLLRPVD…WPPASLKNND (82 aa)) is alpha C-terminal domain (alpha-CTD).

This sequence belongs to the RNA polymerase alpha chain family. As to quaternary structure, homodimer. The RNAP catalytic core consists of 2 alpha, 1 beta, 1 beta' and 1 omega subunit. When a sigma factor is associated with the core the holoenzyme is formed, which can initiate transcription.

The enzyme catalyses RNA(n) + a ribonucleoside 5'-triphosphate = RNA(n+1) + diphosphate. DNA-dependent RNA polymerase catalyzes the transcription of DNA into RNA using the four ribonucleoside triphosphates as substrates. This Saccharophagus degradans (strain 2-40 / ATCC 43961 / DSM 17024) protein is DNA-directed RNA polymerase subunit alpha.